The primary structure comprises 933 residues: Protein translocase subunit SecA (933 aa).

ATP-binding positions include Gln90, 108 to 112, and Asp504; that span reads GEGKT. The disordered stretch occupies residues 539–570; that stretch reads GMGSNNRRPQGFGQDSKKKKWQPSADIFPTDL.

Belongs to the SecA family. In terms of assembly, monomer and homodimer. Part of the essential Sec protein translocation apparatus which comprises SecA, SecYEG and auxiliary proteins SecDF. Other proteins may also be involved.

The protein resides in the cell inner membrane. The protein localises to the cellular thylakoid membrane. Its subcellular location is the cytoplasm. The catalysed reaction is ATP + H2O + cellular proteinSide 1 = ADP + phosphate + cellular proteinSide 2.. Its function is as follows. Part of the Sec protein translocase complex. Interacts with the SecYEG preprotein conducting channel. Has a central role in coupling the hydrolysis of ATP to the transfer of proteins into and across the cell membrane, serving as an ATP-driven molecular motor driving the stepwise translocation of polypeptide chains across the membrane. Probably participates in protein translocation into and across both the cytoplasmic and thylakoid membranes in cyanobacterial cells. This is Protein translocase subunit SecA from Crocosphaera subtropica (strain ATCC 51142 / BH68) (Cyanothece sp. (strain ATCC 51142)).